A 335-amino-acid chain; its full sequence is Zinc finger protein 396 (335 aa).

In terms of domain architecture, SCAN box spans 52–134; the sequence is RQQFRQFGYQ…TMLEDVEREL (83 aa). C2H2-type zinc fingers lie at residues 251 to 273, 279 to 301, and 307 to 329; these read QKCDECGKIFSQSSALILHQRIH, YACDECAKAFSRSAILIQHRRTH, and YKCHDCGKAFSQSSNLFRHRKRH.

The protein belongs to the krueppel C2H2-type zinc-finger protein family. As to quaternary structure, isoforms 1 and 2 can both homo- and hetero-associate. Expressed strongly in liver, moderately in skeletal muscle and weakly in kidney, pancreas, spleen and prostate.

The protein localises to the nucleus. It is found in the cytoplasm. Functionally, isoform 1 and isoform 2 act as DNA-dependent transcriptional repressors. The protein is Zinc finger protein 396 (ZNF396) of Homo sapiens (Human).